The following is a 136-amino-acid chain: uncharacterized protein (136 aa).

Positions 1–19 are cleaved as a signal peptide; the sequence is MKKLLMVILGIALIGMAYA.

This is an uncharacterized protein from Methanocaldococcus jannaschii (strain ATCC 43067 / DSM 2661 / JAL-1 / JCM 10045 / NBRC 100440) (Methanococcus jannaschii).